Reading from the N-terminus, the 445-residue chain is Chromosomal replication initiator protein DnaA (445 aa).

The segment at 1-69 is domain I, interacts with DnaA modulators; sequence MEKIWLEAQS…IEAISSLTNI (69 aa). The interval 69 to 108 is domain II; the sequence is IKYQVDFKITEKSQVEKKKVDLQATEKIENDSTRNVDFNT. A domain III, AAA+ region region spans residues 109–325; it reads NLNPKYTFDS…GMLIRLGAYA (217 aa). Residues G153, G155, K156, and T157 each coordinate ATP. A domain IV, binds dsDNA region spans residues 326–445; that stretch reads SLTGSEISLN…VEKMKKELMS (120 aa).

This sequence belongs to the DnaA family. As to quaternary structure, oligomerizes as a right-handed, spiral filament on DNA at oriC.

The protein resides in the cytoplasm. Its function is as follows. Plays an essential role in the initiation and regulation of chromosomal replication. ATP-DnaA binds to the origin of replication (oriC) to initiate formation of the DNA replication initiation complex once per cell cycle. Binds the DnaA box (a 9 base pair repeat at the origin) and separates the double-stranded (ds)DNA. Forms a right-handed helical filament on oriC DNA; dsDNA binds to the exterior of the filament while single-stranded (ss)DNA is stabiized in the filament's interior. The ATP-DnaA-oriC complex binds and stabilizes one strand of the AT-rich DNA unwinding element (DUE), permitting loading of DNA polymerase. After initiation quickly degrades to an ADP-DnaA complex that is not apt for DNA replication. Binds acidic phospholipids. The sequence is that of Chromosomal replication initiator protein DnaA from Geotalea daltonii (strain DSM 22248 / JCM 15807 / FRC-32) (Geobacter daltonii).